The following is a 221-amino-acid chain: UPF0758 protein YicR (221 aa).

One can recognise an MPN domain in the interval 99-221; it reads ALLSPEMTRE…YVSFAERGWI (123 aa). The Zn(2+) site is built by His170, His172, and Asp183. The short motif at 170 to 183 is the JAMM motif element; it reads HNHPSGCAEPSKAD.

It belongs to the UPF0758 family. YicR subfamily.

This is UPF0758 protein YicR from Salmonella paratyphi A (strain ATCC 9150 / SARB42).